The following is a 1088-amino-acid chain: DNA polymerase delta catalytic subunit (1088 aa).

The protein belongs to the DNA polymerase type-B family. As to quaternary structure, heterodimer with subunits of 125 kDa and 50 kDa. The 125 kDa subunit contains the polymerase active site and most likely the active site for the 3'-5' exonuclease activity.

It localises to the nucleus. The enzyme catalyses DNA(n) + a 2'-deoxyribonucleoside 5'-triphosphate = DNA(n+1) + diphosphate. Its function is as follows. This polymerase possesses two enzymatic activities: DNA synthesis (polymerase) and an exonucleolytic activity that degrades single-stranded DNA in the 3'- to 5'-direction. This is DNA polymerase delta catalytic subunit (POLD1) from Glycine max (Soybean).